The following is a 254-amino-acid chain: Type III pantothenate kinase (254 aa).

Residue 6-13 (DVGNTNIV) coordinates ATP. 107–110 (GADR) is a binding site for substrate. Asp109 acts as the Proton acceptor in catalysis. Asp129 is a binding site for K(+). Residue Thr132 participates in ATP binding. Residue Thr184 participates in substrate binding.

Belongs to the type III pantothenate kinase family. In terms of assembly, homodimer. NH4(+) is required as a cofactor. It depends on K(+) as a cofactor.

Its subcellular location is the cytoplasm. The catalysed reaction is (R)-pantothenate + ATP = (R)-4'-phosphopantothenate + ADP + H(+). It functions in the pathway cofactor biosynthesis; coenzyme A biosynthesis; CoA from (R)-pantothenate: step 1/5. In terms of biological role, catalyzes the phosphorylation of pantothenate (Pan), the first step in CoA biosynthesis. This Exiguobacterium sp. (strain ATCC BAA-1283 / AT1b) protein is Type III pantothenate kinase.